The primary structure comprises 577 residues: Torulene dioxygenase (577 aa).

Positions 1–20 (MALNGPGVYHRTREHEQEDA) are disordered. Fe(2+) contacts are provided by histidine 239, histidine 291, histidine 361, and histidine 570.

It belongs to the carotenoid oxygenase family. It depends on Fe(2+) as a cofactor.

It localises to the cytoplasm. The protein resides in the cytosol. It catalyses the reaction torulene + O2 = 4'-apo-beta-carotenal + 3-methyl-2-butenal. It participates in carotenoid biosynthesis. Torulene dioxygenase; part of pathway that mediates the biosynthesis of neurosporaxanthin, a carboxylic apocarotenoid acting as an essential protective pigments and leading to orange pigmentation. CarT mediates the cleavage of torulene into beta-apo-4'-carotenal, the aldehyde corresponding to the acidic neurosporaxanthin. Is also active on other monocyclic synthetic substrates such as beta-apo-8'-carotenal and beta-apo-10'-carotenal to produce beta-apo-14'-carotenal and retinal(beta-apo-15'-carotenal), respectively. Neurosporaxanthin is synthesized from geranyl-geranyl pyrophosphate (GGPP) through several enzymatic activities. Phytoene synthase activity performed by the bifunctional enzyme carAR first produces phytoene from geranyl-geranyl pyrophosphate (GGPP). The phytoene dehydrogenase carB then introduces 4 desaturations to lead to lycopene which is substrate of the carotene cyclase activity of carAR that leads to the production of gamma-carotene. CarB then performs a 5th desaturation reaction to yield torulene. Torulene is the substrate of the dioxidase carT that breaks the molecule, removing five carbon atoms to yield beta-apo-4'-carotenal, whereas the aldehyde dehydrogenase carD mediates the last step by converting beta-apo-4'-carotenal into neurosporaxanthin. The chain is Torulene dioxygenase from Gibberella fujikuroi (strain CBS 195.34 / IMI 58289 / NRRL A-6831) (Bakanae and foot rot disease fungus).